The chain runs to 328 residues: Nickel import system permease protein NikB (328 aa).

Transmembrane regions (helical) follow at residues 11–31 (LMQMIVVLFVISTLTFILMKL), 104–124 (LLISFSTLVVSLCISIPLGII), 139–159 (VISTLSISLPAFFIGIILLFI), 170–190 (ILSQFILPVITLSLGMCAYII), 229–249 (ILPIIPLLGISLGSLIGGTVV), and 279–299 (VLFIGFFVVIINTIADLLTLL). Residues 100–297 (APITLLISFS…IINTIADLLT (198 aa)) form the ABC transmembrane type-1 domain.

This sequence belongs to the binding-protein-dependent transport system permease family. OppBC subfamily. In terms of assembly, the complex is composed of two ATP-binding proteins (NikD and NikE), two transmembrane proteins (NikB and NikC) and a solute-binding protein (NikA).

It is found in the cell membrane. Part of the ABC transporter complex NikABCDE (Opp2) involved in nickel import. Probably responsible for the translocation of the substrate across the membrane. In Staphylococcus aureus (strain USA300), this protein is Nickel import system permease protein NikB.